A 219-amino-acid chain; its full sequence is 7-cyano-7-deazaguanine synthase (219 aa).

Position 10-20 (10-20 (FSGGQDSTTCL)) interacts with ATP. Cysteine 188, cysteine 196, cysteine 199, and cysteine 202 together coordinate Zn(2+).

Belongs to the QueC family. It depends on Zn(2+) as a cofactor.

It carries out the reaction 7-carboxy-7-deazaguanine + NH4(+) + ATP = 7-cyano-7-deazaguanine + ADP + phosphate + H2O + H(+). It participates in purine metabolism; 7-cyano-7-deazaguanine biosynthesis. Functionally, catalyzes the ATP-dependent conversion of 7-carboxy-7-deazaguanine (CDG) to 7-cyano-7-deazaguanine (preQ(0)). The protein is 7-cyano-7-deazaguanine synthase of Neisseria meningitidis serogroup C / serotype 2a (strain ATCC 700532 / DSM 15464 / FAM18).